The sequence spans 138 residues: Large ribosomal subunit protein uL16 (138 aa).

Over residues Met1–Gln17 the composition is skewed to basic residues. Residues Met1–Gly24 form a disordered region.

It belongs to the universal ribosomal protein uL16 family. Part of the 50S ribosomal subunit.

Binds 23S rRNA and is also seen to make contacts with the A and possibly P site tRNAs. The polypeptide is Large ribosomal subunit protein uL16 (Mycolicibacterium vanbaalenii (strain DSM 7251 / JCM 13017 / BCRC 16820 / KCTC 9966 / NRRL B-24157 / PYR-1) (Mycobacterium vanbaalenii)).